A 249-amino-acid chain; its full sequence is Capsid protein (249 aa).

The disordered stretch occupies residues 1-33 (MDTDGDNDVFGSGNDTRNNDDKKKEEMKQNISD). The segment covering 17–28 (RNNDDKKKEEMK) has biased composition (basic and acidic residues).

Belongs to the closteroviridae capsid protein family.

It localises to the virion. Functionally, capsid protein self-assembles to form filamentous capsids, about 650-850 nm in length. In Beta vulgaris (Sugar beet), this protein is Capsid protein.